Reading from the N-terminus, the 1136-residue chain is Unconventional myosin-Ib (1136 aa).

The Myosin motor domain occupies 15–701 (IGVGDTVLLE…TLFQLEDLRK (687 aa)). Position 60 is a phosphoserine (S60). 108–115 (GESGAGKT) lines the ATP pocket. A Glycyl lysine isopeptide (Lys-Gly) (interchain with G-Cter in SUMO1); alternate cross-link involves residue K287. Residue K287 forms a Glycyl lysine isopeptide (Lys-Gly) (interchain with G-Cter in SUMO2); alternate linkage. The segment at 592–599 (YIRCIKPN) is actin-binding. 6 IQ domains span residues 704–729 (LEDLATLIQKIYRGWKCRTHFLLMKR), 730–750 (SQVVIAAWYRRYAQQKRYQQI), 750–778 (IKSSALVIQSYIRGWKARKILRELKHQKR), 780–807 (KEAATTIAAYWHGTQARKERRRLKDEAR), 808–837 (NKHAIAVIWAFWLGSKARRELKRLKEEARR), and 837–866 (RKHAVAVIWAYWLGLKVRREYRKFFRANAG). In terms of domain architecture, TH1 spans 952 to 1136 (KALYPSSVGQ…NNRLLEVAVP (185 aa)).

This sequence belongs to the TRAFAC class myosin-kinesin ATPase superfamily. Myosin family.

Its function is as follows. Motor protein that may participate in process critical to neuronal development and function such as cell migration, neurite outgrowth and vesicular transport. This Rattus norvegicus (Rat) protein is Unconventional myosin-Ib (Myo1b).